Consider the following 230-residue polypeptide: Androgen-dependent TFPI-regulating protein (230 aa).

The Cytoplasmic segment spans residues 1–3 (MTK). A helical membrane pass occupies residues 4–24 (TSTCIYHFLVLSWYTFLNYYI). The Extracellular segment spans residues 25–46 (SQEGKDEVKPKILANGARWKYM). Residues 47–67 (TLLNLLLQTIFYGVTCLDDVL) traverse the membrane as a helical segment. Over 68–85 (KRTKGGKDIKFLTAFRDL) the chain is Cytoplasmic. The chain crosses the membrane as a helical span at residues 86–106 (LFTTLAFPVSTFVFLAFWILF). Residues 107-119 (LYNRDLIYPKVLD) lie on the Extracellular side of the membrane. A helical transmembrane segment spans residues 120–140 (TVIPVWLNHAMHTFIFPITLA). At 141-154 (EVVLRPHSYPSKKT) the chain is on the cytoplasmic side. The helical transmembrane segment at 155 to 175 (GLTLLAAASIAYISRILWLYF) threads the bilayer. The Extracellular portion of the chain corresponds to 176-189 (ETGTWVYPVFAKLS). The chain crosses the membrane as a helical span at residues 190 to 210 (LLGLAAFFSLSYVFIASIYLL). Residues 211–230 (GEKLNHWKWGDMRQPRKKRK) lie on the Cytoplasmic side of the membrane.

It belongs to the AIG1 family. As to expression, expressed in cultured endothelial cells and in placenta.

It is found in the cell membrane. It catalyses the reaction 9-hexadecanoyloxy-octadecanoate + H2O = 9-hydroxy-octadecanoate + hexadecanoate + H(+). The catalysed reaction is 12-hexadecanoyloxy-octadecanoate + H2O = 12-hydroxyoctadecanoate + hexadecanoate + H(+). It carries out the reaction 9-(9Z-hexadecenoyloxy)-octadecanoate + H2O = (9Z)-hexadecenoate + 9-hydroxy-octadecanoate + H(+). The enzyme catalyses 12-(9Z-hexadecenoyloxy)-octadecanoate + H2O = 12-hydroxyoctadecanoate + (9Z)-hexadecenoate + H(+). It catalyses the reaction 13-(9Z-hexadecenoyloxy)-octadecanoate + H2O = 13-hydroxy-octadecanoate + (9Z)-hexadecenoate + H(+). The catalysed reaction is 9-octadecanoyloxy-octadecanoate + H2O = 9-hydroxy-octadecanoate + octadecanoate + H(+). It carries out the reaction 12-octadecanoyloxy-octadecanoate + H2O = 12-hydroxyoctadecanoate + octadecanoate + H(+). The enzyme catalyses 13-octadecanoyloxy-octadecanoate + H2O = 13-hydroxy-octadecanoate + octadecanoate + H(+). It catalyses the reaction 9-(9Z-octadecenoyloxy)-octadecanoate + H2O = 9-hydroxy-octadecanoate + (9Z)-octadecenoate + H(+). The catalysed reaction is 12-(9Z-octadecenoyloxy)-octadecanoate + H2O = 12-hydroxyoctadecanoate + (9Z)-octadecenoate + H(+). It carries out the reaction 13-(9Z-octadecenoyloxy)-octadecanoate + H2O = 13-hydroxy-octadecanoate + (9Z)-octadecenoate + H(+). The enzyme catalyses 5-(9Z-octadecenoyloxy)-octadecanoate + H2O = 5-hydroxy-octadecanoate + (9Z)-octadecenoate + H(+). Inhibited by N-hydroxyhydantoin carbamate JJH260 and beta-lactone KC01. Its function is as follows. Hydrolyzes bioactive fatty-acid esters of hydroxy-fatty acids (FAHFAs), but not other major classes of lipids. Show a preference for FAHFAs with branching distal from the carboxylate head group of the lipids. Regulates the expression and the cell-associated anticoagulant activity of the inhibitor TFPI in endothelial cells (in vitro). The sequence is that of Androgen-dependent TFPI-regulating protein (ADTRP) from Homo sapiens (Human).